The chain runs to 241 residues: Glucosamine-6-phosphate deaminase (241 aa).

Asp67 serves as the catalytic Proton acceptor; for enolization step. Asn136 acts as the For ring-opening step in catalysis. The Proton acceptor; for ring-opening step role is filled by His138. Residue Glu143 is the For ring-opening step of the active site.

The protein belongs to the glucosamine/galactosamine-6-phosphate isomerase family. NagB subfamily.

The catalysed reaction is alpha-D-glucosamine 6-phosphate + H2O = beta-D-fructose 6-phosphate + NH4(+). It participates in amino-sugar metabolism; N-acetylneuraminate degradation; D-fructose 6-phosphate from N-acetylneuraminate: step 5/5. Functionally, catalyzes the reversible isomerization-deamination of glucosamine 6-phosphate (GlcN6P) to form fructose 6-phosphate (Fru6P) and ammonium ion. This chain is Glucosamine-6-phosphate deaminase, found in Clostridium tetani (strain Massachusetts / E88).